A 268-amino-acid polypeptide reads, in one-letter code: Methionine aminopeptidase (268 aa).

Histidine 79 contacts substrate. Aspartate 97, aspartate 108, and histidine 172 together coordinate a divalent metal cation. Histidine 179 serves as a coordination point for substrate. A divalent metal cation is bound by residues glutamate 205 and glutamate 236.

This sequence belongs to the peptidase M24A family. Methionine aminopeptidase type 1 subfamily. Monomer. It depends on Co(2+) as a cofactor. Zn(2+) is required as a cofactor. Requires Mn(2+) as cofactor. The cofactor is Fe(2+).

The catalysed reaction is Release of N-terminal amino acids, preferentially methionine, from peptides and arylamides.. Removes the N-terminal methionine from nascent proteins. The N-terminal methionine is often cleaved when the second residue in the primary sequence is small and uncharged (Met-Ala-, Cys, Gly, Pro, Ser, Thr, or Val). Requires deformylation of the N(alpha)-formylated initiator methionine before it can be hydrolyzed. This is Methionine aminopeptidase from Haemophilus influenzae (strain ATCC 51907 / DSM 11121 / KW20 / Rd).